A 449-amino-acid chain; its full sequence is MSARKYFGTDGIRGRVGQGVISADFVLRLGNALGRVLTQIRGKRPLVLIGKDTRISGYMFEAALEAGLVAAGADVQLIGPMPTPAIAFLTSTLRADAGVVISASHNPHYDNGIKFFSAEGEKLDDATEAAIEAALDAPFHTVESERLGKAIRTRDAIGRYIEFCKASVARGFTLKWLKMVLDCAHGATYHIAPMLFRELGAEVVVIGAAPDGLNINAGVGSTHIDNLAAKVREYGAHLGIAFDGDGDRVLMADDQGNPVDGDDLLYVLARSWQASGRLTGTVVGTLMTNYGLEQALAALNIPFQRAKVGDRYVHQALVEGGGTLGGETSGHLLCLDRATTGDGIVSALQVLEALGRDGHSLRKALSSLSKVPQKTVNVRLDGGAAKAIVEAANVQQALQQAQAAVQGRGRAFLRPSGTEPVVRVTVEADDARLMQDTLDRLSGAVRDAA.

The Phosphoserine intermediate role is filled by S104. Positions 104, 243, 245, and 247 each coordinate Mg(2+). At S104 the chain carries Phosphoserine.

It belongs to the phosphohexose mutase family. Requires Mg(2+) as cofactor. Post-translationally, activated by phosphorylation.

The catalysed reaction is alpha-D-glucosamine 1-phosphate = D-glucosamine 6-phosphate. Catalyzes the conversion of glucosamine-6-phosphate to glucosamine-1-phosphate. This is Phosphoglucosamine mutase from Xanthomonas oryzae pv. oryzae (strain PXO99A).